Consider the following 888-residue polypeptide: Probable disease resistance protein At5g63020 (888 aa).

Residues 22–66 (LNRNGDYIHGLEENLTALQRALEQIEQRREDLLRKILSEERRGLQ) adopt a coiled-coil conformation. Positions 139–442 (AERVDAARVE…GEGFIDRNKG (304 aa)) constitute an NB-ARC domain. 181–188 (GMGGVGKT) contributes to the ATP binding site. 5 LRR repeats span residues 512 to 533 (VARR…PESP), 534 to 555 (QLIT…FFRL), 558 to 580 (MLVV…ISEC), 582 to 604 (SLQY…VELR), and 605 to 627 (KLLY…SGLT).

The protein belongs to the disease resistance NB-LRR family.

In terms of biological role, probable disease resistance protein. This is Probable disease resistance protein At5g63020 from Arabidopsis thaliana (Mouse-ear cress).